The following is a 429-amino-acid chain: Adenylosuccinate synthetase (429 aa).

Residues glycine 12–lysine 18 and glycine 40–threonine 42 contribute to the GTP site. Aspartate 13 acts as the Proton acceptor in catalysis. Residues aspartate 13 and glycine 40 each coordinate Mg(2+). IMP-binding positions include aspartate 13–lysine 16, asparagine 38–histidine 41, threonine 129, arginine 143, glutamine 223, threonine 238, and arginine 302. Histidine 41 functions as the Proton donor in the catalytic mechanism. Valine 298–arginine 304 is a substrate binding site. GTP-binding positions include arginine 304, lysine 330–aspartate 332, and serine 412–serine 414.

This sequence belongs to the adenylosuccinate synthetase family. As to quaternary structure, homodimer. Requires Mg(2+) as cofactor.

It is found in the cytoplasm. It catalyses the reaction IMP + L-aspartate + GTP = N(6)-(1,2-dicarboxyethyl)-AMP + GDP + phosphate + 2 H(+). Its pathway is purine metabolism; AMP biosynthesis via de novo pathway; AMP from IMP: step 1/2. Plays an important role in the de novo pathway of purine nucleotide biosynthesis. Catalyzes the first committed step in the biosynthesis of AMP from IMP. This chain is Adenylosuccinate synthetase, found in Brucella anthropi (strain ATCC 49188 / DSM 6882 / CCUG 24695 / JCM 21032 / LMG 3331 / NBRC 15819 / NCTC 12168 / Alc 37) (Ochrobactrum anthropi).